Here is a 271-residue protein sequence, read N- to C-terminus: Bis(5'-nucleosyl)-tetraphosphatase, symmetrical (271 aa).

Belongs to the Ap4A hydrolase family.

It catalyses the reaction P(1),P(4)-bis(5'-adenosyl) tetraphosphate + H2O = 2 ADP + 2 H(+). Functionally, hydrolyzes diadenosine 5',5'''-P1,P4-tetraphosphate to yield ADP. This is Bis(5'-nucleosyl)-tetraphosphatase, symmetrical from Aliivibrio fischeri (strain ATCC 700601 / ES114) (Vibrio fischeri).